Consider the following 417-residue polypeptide: Probable diacetyl reductase [(R)-acetoin forming] 2 (417 aa).

Cys39 contributes to the Zn(2+) binding site. Residue Ser63 is modified to Phosphoserine. 5 residues coordinate Zn(2+): His64, Cys120, Cys123, Cys131, and Gln173. The interval 380-417 (GELNREADNEKKEISELSSRKDQERLRESINEAKLRHT) is disordered. Over residues 381–417 (ELNREADNEKKEISELSSRKDQERLRESINEAKLRHT) the composition is skewed to basic and acidic residues.

It belongs to the zinc-containing alcohol dehydrogenase family. Requires Zn(2+) as cofactor.

The protein localises to the cytoplasm. Its subcellular location is the nucleus. The enzyme catalyses (R)-acetoin + NAD(+) = diacetyl + NADH + H(+). In terms of biological role, catalyzes the irreversible reduction of 2,3-butanediol to (S)-acetoin in the presence of NADH. This Saccharomyces cerevisiae (strain ATCC 204508 / S288c) (Baker's yeast) protein is Probable diacetyl reductase [(R)-acetoin forming] 2 (BDH2).